The chain runs to 392 residues: MLMSLAQWLQTLSPEFGFLRVFQYLTFRALMAALTALVVGLVAGPYVIRRLAALKIGQPVRGYGMETHLTKSGTPTMGGVLVLFAIAFATLMWFDPSNRFVWIVLWVTLGFGAIGWVDDWRKVVRKDPEGMRSREKYFWQSVVGLIAGFYLLFSISESSNWRVLQLFFAWVQSGFDLDFPPKINLLVPFFKEVSYPLGGIGFVILTYLVIVGASNAVNLTDGLDGLAIMPVVMVGSALGVFAYVTGSAVYSKYLLFPNIPGSGELLVFCSAMAGAGLAFLWFNTHPAQVFMGDVGALALGGALGTIAVIVRQEIVFFIMGGIFVVEAISVMAQVMYFKYTKKRYGEGRRVLKMAPLHHHFEKSGWRETQVVVRFWIITMLLCLIGLSTLKLR.

A run of 10 helical transmembrane segments spans residues 28 to 48, 74 to 94, 100 to 120, 137 to 157, 193 to 213, 225 to 245, 262 to 282, 289 to 309, 314 to 334, and 369 to 389; these read RALM…PYVI, TPTM…LMWF, FVWI…VDDW, YFWQ…SISE, VSYP…IVGA, GLAI…AYVT, SGEL…FLWF, VFMG…IAVI, IVFF…MAQV, and QVVV…LSTL.

It belongs to the glycosyltransferase 4 family. MraY subfamily. Requires Mg(2+) as cofactor.

The protein localises to the cell inner membrane. The catalysed reaction is UDP-N-acetyl-alpha-D-muramoyl-L-alanyl-gamma-D-glutamyl-meso-2,6-diaminopimeloyl-D-alanyl-D-alanine + di-trans,octa-cis-undecaprenyl phosphate = di-trans,octa-cis-undecaprenyl diphospho-N-acetyl-alpha-D-muramoyl-L-alanyl-D-glutamyl-meso-2,6-diaminopimeloyl-D-alanyl-D-alanine + UMP. It participates in cell wall biogenesis; peptidoglycan biosynthesis. Functionally, catalyzes the initial step of the lipid cycle reactions in the biosynthesis of the cell wall peptidoglycan: transfers peptidoglycan precursor phospho-MurNAc-pentapeptide from UDP-MurNAc-pentapeptide onto the lipid carrier undecaprenyl phosphate, yielding undecaprenyl-pyrophosphoryl-MurNAc-pentapeptide, known as lipid I. The polypeptide is Phospho-N-acetylmuramoyl-pentapeptide-transferase (Variovorax paradoxus (strain S110)).